The sequence spans 160 residues: Phosphopantetheine adenylyltransferase (160 aa).

Ser9 contacts substrate. Residues 9–10 (SF) and His17 contribute to the ATP site. Lys41, Thr73, and Arg87 together coordinate substrate. ATP contacts are provided by residues 88 to 90 (GMR), Glu98, and 123 to 129 (YTFFSSS).

The protein belongs to the bacterial CoaD family. In terms of assembly, homohexamer. The cofactor is Mg(2+).

The protein localises to the cytoplasm. The catalysed reaction is (R)-4'-phosphopantetheine + ATP + H(+) = 3'-dephospho-CoA + diphosphate. The protein operates within cofactor biosynthesis; coenzyme A biosynthesis; CoA from (R)-pantothenate: step 4/5. In terms of biological role, reversibly transfers an adenylyl group from ATP to 4'-phosphopantetheine, yielding dephospho-CoA (dPCoA) and pyrophosphate. The protein is Phosphopantetheine adenylyltransferase of Roseiflexus sp. (strain RS-1).